The sequence spans 490 residues: Glutathione reductase (490 aa).

The FAD site is built by Ser-19 and Gly-20. Position 19 (Ser-19) interacts with glutathione. Arg-26 is a binding site for glutathione. Positions 39, 48, 49, and 57 each coordinate FAD. A disulfide bridge connects residues Cys-49 and Cys-54. Tyr-110 serves as a coordination point for glutathione. Residue Ala-126 participates in FAD binding. NADP(+)-binding residues include Ala-208, Ile-211, Glu-214, Arg-231, and Arg-237. Residue Ser-246 coordinates glutathione. Residue Gly-297 participates in NADP(+) binding. Residue Asp-337 coordinates FAD. Glu-343 contributes to the NADP(+) binding site. Residue Thr-345 coordinates FAD. Arg-353 provides a ligand contact to glutathione. Val-379 serves as a coordination point for NADP(+). Lys-432 is a binding site for glutathione. His-479 lines the FAD pocket. His-479 acts as the Proton acceptor in catalysis.

It belongs to the class-I pyridine nucleotide-disulfide oxidoreductase family. In terms of assembly, homodimer. FAD is required as a cofactor.

Its subcellular location is the cytoplasm. It is found in the mitochondrion. It carries out the reaction 2 glutathione + NADP(+) = glutathione disulfide + NADPH + H(+). Catalyzes the reduction of glutathione disulfide (GSSG) to reduced glutathione (GSH). Constitutes the major mechanism to maintain a high GSH:GSSG ratio in the cytosol. The polypeptide is Glutathione reductase (GLR1) (Debaryomyces hansenii (strain ATCC 36239 / CBS 767 / BCRC 21394 / JCM 1990 / NBRC 0083 / IGC 2968) (Yeast)).